We begin with the raw amino-acid sequence, 1465 residues long: DNA polymerase III PolC-type (1465 aa).

The Exonuclease domain maps to tyrosine 425–leucine 581.

This sequence belongs to the DNA polymerase type-C family. PolC subfamily.

The protein localises to the cytoplasm. The enzyme catalyses DNA(n) + a 2'-deoxyribonucleoside 5'-triphosphate = DNA(n+1) + diphosphate. In terms of biological role, required for replicative DNA synthesis. This DNA polymerase also exhibits 3' to 5' exonuclease activity. The sequence is that of DNA polymerase III PolC-type from Streptococcus mutans serotype c (strain ATCC 700610 / UA159).